The primary structure comprises 427 residues: 5'-deoxyadenosine deaminase (427 aa).

H62 and H64 together coordinate Zn(2+). E91 and H183 together coordinate substrate. H210 contacts Zn(2+). Substrate-binding residues include E213 and D298. A Zn(2+)-binding site is contributed by D298.

Belongs to the metallo-dependent hydrolases superfamily. MTA/SAH deaminase family. In terms of assembly, homotetramer. The cofactor is Zn(2+).

It catalyses the reaction 5'-deoxyadenosine + H2O + H(+) = 5'-deoxyinosine + NH4(+). It carries out the reaction S-adenosyl-L-homocysteine + H2O + H(+) = S-inosyl-L-homocysteine + NH4(+). The enzyme catalyses S-methyl-5'-thioadenosine + H2O + H(+) = S-methyl-5'-thioinosine + NH4(+). The catalysed reaction is adenosine + H2O + H(+) = inosine + NH4(+). Its pathway is amino-acid biosynthesis; S-adenosyl-L-methionine biosynthesis. Catalyzes the deamination of three SAM-derived enzymatic products, namely 5'-deoxyadenosine, S-adenosyl-L-homocysteine, and 5'-methylthioadenosine, to produce the inosine analogs. Can also deaminate adenosine. The preferred substrate for this enzyme is 5'-deoxyadenosine, but all these substrates are efficiently deaminated. Likely functions in a S-adenosyl-L-methionine (SAM) recycling pathway from S-adenosyl-L-homocysteine (SAH) produced from SAM-dependent methylation reactions. May also be involved in the recycling of 5'-deoxyadenosine, whereupon the 5'-deoxyribose moiety of 5'-deoxyinosine is further metabolized to deoxyhexoses used for the biosynthesis of aromatic amino acids in methanogens. The polypeptide is 5'-deoxyadenosine deaminase (Methanothermobacter thermautotrophicus (strain ATCC 29096 / DSM 1053 / JCM 10044 / NBRC 100330 / Delta H) (Methanobacterium thermoautotrophicum)).